A 36-amino-acid chain; its full sequence is MVRRRRLRRRISRRIFRRTVARVGRRRRSFRGGIRF.

It belongs to the microviridae J protein family.

It is found in the virion. The protein resides in the host cytoplasm. Functionally, mediates ssDNA packaging into virion, it locates to the internal surface of the capsid. Additionally, plays a role in viral attachment to the host cell. The protein is DNA binding protein ORF8 of Chlamydia phage 1 (Bacteriophage Chp1).